We begin with the raw amino-acid sequence, 365 residues long: Chorismate synthase (365 aa).

Position 46 (Arg-46) interacts with NADP(+). FMN is bound by residues 124–126, Gly-284, 299–303, and Arg-326; these read RAS and KPTPS.

It belongs to the chorismate synthase family. FMNH2 is required as a cofactor.

The enzyme catalyses 5-O-(1-carboxyvinyl)-3-phosphoshikimate = chorismate + phosphate. Its pathway is metabolic intermediate biosynthesis; chorismate biosynthesis; chorismate from D-erythrose 4-phosphate and phosphoenolpyruvate: step 7/7. Its function is as follows. Catalyzes the anti-1,4-elimination of the C-3 phosphate and the C-6 proR hydrogen from 5-enolpyruvylshikimate-3-phosphate (EPSP) to yield chorismate, which is the branch point compound that serves as the starting substrate for the three terminal pathways of aromatic amino acid biosynthesis. This reaction introduces a second double bond into the aromatic ring system. This chain is Chorismate synthase, found in Pyrobaculum islandicum (strain DSM 4184 / JCM 9189 / GEO3).